The chain runs to 314 residues: tRNA dimethylallyltransferase (314 aa).

12-19 lines the ATP pocket; that stretch reads GPTAGGKS. 14–19 is a binding site for substrate; sequence TAGGKS. Residues 37-40 are interaction with substrate tRNA; that stretch reads DSMQ.

It belongs to the IPP transferase family. In terms of assembly, monomer. Mg(2+) is required as a cofactor.

The enzyme catalyses adenosine(37) in tRNA + dimethylallyl diphosphate = N(6)-dimethylallyladenosine(37) in tRNA + diphosphate. In terms of biological role, catalyzes the transfer of a dimethylallyl group onto the adenine at position 37 in tRNAs that read codons beginning with uridine, leading to the formation of N6-(dimethylallyl)adenosine (i(6)A). The sequence is that of tRNA dimethylallyltransferase from Rhodospirillum centenum (strain ATCC 51521 / SW).